A 197-amino-acid chain; its full sequence is Ribonuclease HII (197 aa).

The RNase H type-2 domain occupies 11–197 (GRIAGVDEVG…FGPVKRVLGL (187 aa)). 3 residues coordinate a divalent metal cation: Asp-17, Glu-18, and Asp-109.

Belongs to the RNase HII family. The cofactor is Mn(2+). It depends on Mg(2+) as a cofactor.

Its subcellular location is the cytoplasm. The catalysed reaction is Endonucleolytic cleavage to 5'-phosphomonoester.. In terms of biological role, endonuclease that specifically degrades the RNA of RNA-DNA hybrids. This Edwardsiella ictaluri (strain 93-146) protein is Ribonuclease HII.